The chain runs to 550 residues: Glucose-6-phosphate isomerase (550 aa).

Glu-356 acts as the Proton donor in catalysis. Catalysis depends on residues His-387 and Lys-515.

Belongs to the GPI family.

It is found in the cytoplasm. It carries out the reaction alpha-D-glucose 6-phosphate = beta-D-fructose 6-phosphate. Its pathway is carbohydrate biosynthesis; gluconeogenesis. The protein operates within carbohydrate degradation; glycolysis; D-glyceraldehyde 3-phosphate and glycerone phosphate from D-glucose: step 2/4. Catalyzes the reversible isomerization of glucose-6-phosphate to fructose-6-phosphate. The chain is Glucose-6-phosphate isomerase from Aliivibrio salmonicida (strain LFI1238) (Vibrio salmonicida (strain LFI1238)).